Reading from the N-terminus, the 130-residue chain is UPF0102 protein TDE_2303 (130 aa).

The protein belongs to the UPF0102 family.

The chain is UPF0102 protein TDE_2303 from Treponema denticola (strain ATCC 35405 / DSM 14222 / CIP 103919 / JCM 8153 / KCTC 15104).